Consider the following 253-residue polypeptide: RNA polymerase sigma factor SigI6 (253 aa).

A Polymerase core binding motif is present at residues Glu-63–Ile-76. The H-T-H motif DNA-binding region spans Thr-203 to Lys-222.

It belongs to the sigma-70 factor family. SigI subfamily. In terms of assembly, interacts with RsgI6.

It localises to the cytoplasm. With respect to regulation, negatively regulated by the anti-sigma-I factor RsgI6. Binding of the polysaccharide substrate to RsgI6 may lead to the release and activation of SigI6. In terms of biological role, sigma factors are initiation factors that promote the attachment of RNA polymerase to specific initiation sites and are then released. This sigma factor is involved in regulation of cellulosomal genes via an external polysaccharide-sensing mechanism. Recognizes the predicted promoters associated with sigI6 itself, xyn11B, xyn10D, xyn10Z, xyn10Y, cel9V, cseP, sigI1, cipA, and rsgI5. This Acetivibrio thermocellus (strain ATCC 27405 / DSM 1237 / JCM 9322 / NBRC 103400 / NCIMB 10682 / NRRL B-4536 / VPI 7372) (Clostridium thermocellum) protein is RNA polymerase sigma factor SigI6.